The chain runs to 164 residues: UPF0304 protein YfbU (164 aa).

The protein belongs to the UPF0304 family.

This Escherichia coli O6:H1 (strain CFT073 / ATCC 700928 / UPEC) protein is UPF0304 protein YfbU (yfbU).